We begin with the raw amino-acid sequence, 444 residues long: Protein kinase C and casein kinase substrate in neurons protein 1 (444 aa).

Phosphoserine occurs at positions 2 and 79. The region spanning 13–283 (EETTDSFWEV…AIRGADAQED (271 aa)) is the F-BAR domain. Positions 26-275 (KRTVKRIDDG…HVYRELEQAI (250 aa)) form a coiled coil. 2 disordered regions span residues 175–194 (MNSK…LQDK) and 309–386 (LPHT…DDSK). The residue at position 184 (threonine 184) is a Phosphothreonine. Residues 314–324 (TKKEKQPKKAE) are compositionally biased toward basic and acidic residues. Over residues 329–351 (TNATGAVESTSQAGDRGSVSSYD) the composition is skewed to polar residues. Residues serine 346, serine 348, serine 349, serine 361, and serine 365 each carry the phosphoserine modification. Positions 385–444 (SKGVRVRALYDYDGQEQDELSFKAGDELTKLGEEDEQGWCRGRLDSGQLGLYPANYVEAI) constitute an SH3 domain. A Phosphotyrosine modification is found at tyrosine 394. 2 positions are modified to phosphoserine: serine 405 and serine 430.

It belongs to the PACSIN family. May form heterooligomers with other PACSINs. Interacts with MAPT. Interacts with TRPV4. Interacts (via SH3 domain) with SYNJ1 and WASL. Interacts with DNM2 and DNM3. Interacts with both COBL and DBNL. Identified in a complex composed of COBL, PACSIN1 and WASL. Interacts with EHD1 and EHD3. Homodimer. Interacts (via SH3 domain) with DNM1; the interaction is reduced by DNM1 phosphorylation. Phosphorylated by casein kinase 2 (CK2) and protein kinase C (PKC). In terms of tissue distribution, highly expressed in brain and, at much lower levels, in heart and pancreas.

Its subcellular location is the cytoplasm. It is found in the cell projection. It localises to the synapse. The protein localises to the synaptosome. The protein resides in the ruffle membrane. Its subcellular location is the membrane. It is found in the cytoplasmic vesicle membrane. It localises to the cytosol. The protein localises to the cell membrane. Functionally, plays a role in the reorganization of the microtubule cytoskeleton via its interaction with MAPT; this decreases microtubule stability and inhibits MAPT-induced microtubule polymerization. Plays a role in cellular transport processes by recruiting DNM1, DNM2 and DNM3 to membranes. Plays a role in the reorganization of the actin cytoskeleton and in neuron morphogenesis via its interaction with COBL and WASL, and by recruiting COBL to the cell cortex. Plays a role in the regulation of neurite formation, neurite branching and the regulation of neurite length. Required for normal synaptic vesicle endocytosis; this process retrieves previously released neurotransmitters to accommodate multiple cycles of neurotransmission. Required for normal excitatory and inhibitory synaptic transmission. Binds to membranes via its F-BAR domain and mediates membrane tubulation. The chain is Protein kinase C and casein kinase substrate in neurons protein 1 (PACSIN1) from Homo sapiens (Human).